Consider the following 332-residue polypeptide: MQQVVYVASPESQQIHVWQLGAQGNLTLLQTVDVPGQVQPMVIAPNKRHLYVGVRPDFRVLSYRIDEQGKLTEAGVASLPGSPTHLSTDNDGRFLFSASYSGACVSVSPIGADGIVGEPIQQLDGLEGCHSTNIDPTNRVVWAPCLKEDRIRLYDLGATGELSVHRQAEMTTVAGAGPRHMAFHPNQRFAYCVNELDSSVDVYQLDAASGELEKVQTLDAMPAGFNDTRWAADIHITPNGRFLYISDRTASLLSIFQVSEDGSALTLTGHQPTETQPRGFNIDNTGEFLISAGQKSQHIEVYHIDQNTGDLQPLARYAVGQGPMWVSVLALD.

The protein belongs to the cycloisomerase 2 family.

The enzyme catalyses 6-phospho-D-glucono-1,5-lactone + H2O = 6-phospho-D-gluconate + H(+). It participates in carbohydrate degradation; pentose phosphate pathway; D-ribulose 5-phosphate from D-glucose 6-phosphate (oxidative stage): step 2/3. Catalyzes the hydrolysis of 6-phosphogluconolactone to 6-phosphogluconate. This Pectobacterium carotovorum subsp. carotovorum (strain PC1) protein is 6-phosphogluconolactonase.